A 507-amino-acid polypeptide reads, in one-letter code: Cuticlin-4 (507 aa).

Residues 1-19 form the signal peptide; sequence MFHFTRILAAFLLPTLCFC. Residues 20–471 are Extracellular-facing; sequence GYSTAPSSTV…KTCFSTSRMY (452 aa). A ZP domain is found at 42-280; sequence VCETASISLL…YGCSNTQPQC (239 aa). Positions 292-350 are disordered; it reads KTTETAEPYPYDSHESGYPTRPANYPVASSRYPIPTTQAPASYPSSPAPPPPGADIDNG. Residues asparagine 374 and asparagine 408 are each glycosylated (N-linked (GlcNAc...) asparagine). The chain crosses the membrane as a helical span at residues 472–492; that stretch reads FTLILLCLLFATTVVVFIVIV. Residues 493–507 are Cytoplasmic-facing; the sequence is QKQRQILAQTAFFKP.

The protein resides in the cell membrane. Functionally, plays a role in alae formation and subsequent cuticle attachment in adults. The protein is Cuticlin-4 of Caenorhabditis elegans.